A 72-amino-acid chain; its full sequence is Holocyclotoxin-1 (72 aa).

The signal sequence occupies residues 1–22 (MSKVTTVFIGALVLLLLIENGF). 4 cysteine pairs are disulfide-bonded: Cys-24–Cys-40, Cys-32–Cys-57, Cys-36–Cys-60, and Cys-42–Cys-70.

As to expression, expressed in salivary glands.

The protein localises to the secreted. Functionally, probable neurotoxin. This Ixodes holocyclus (Australian paralysis tick) protein is Holocyclotoxin-1.